The sequence spans 587 residues: Putative adhesin (587 aa).

The signal sequence occupies residues 1-19 (MKFAISTLLIILQAAAVFA). A disulfide bridge connects residues Cys211 and Cys261. A glycan (N-linked (GlcNAc...) asparagine) is linked at Asn239. 4 consecutive repeat copies span residues 432-455 (IVTV…TYTK), 466-489 (IVTV…TYTK), 491-512 (PEIV…YHDV), and 513-531 (PEVV…TTTY). The segment at 432–531 (IVTVITKEGG…EGGEKVTTTY (100 aa)) is 4 X 24 AA approximate tandem repeats, Thr-rich. Residue Ser562 is the site of GPI-anchor amidated serine attachment. The propeptide at 563–587 (EAQVNLGSKSAVGLLAIVPMLFLAI) is removed in mature form.

Post-translationally, the GPI-anchor is attached to the protein in the endoplasmic reticulum and serves to target the protein to the cell surface. There, the glucosamine-inositol phospholipid moiety is cleaved off and the GPI-modified mannoprotein is covalently attached via its lipidless GPI glycan remnant to the 1,6-beta-glucan of the outer cell wall layer.

It localises to the cell membrane. The protein resides in the secreted. It is found in the cell wall. Its function is as follows. Putative adhesion protein. May be involved in cell-cell interaction, interacting with other proteins by salt bridges and hydrogen bonds. The protein is Putative adhesin of Komagataella phaffii (strain ATCC 76273 / CBS 7435 / CECT 11047 / NRRL Y-11430 / Wegner 21-1) (Yeast).